The following is a 241-amino-acid chain: ATP synthase subunit a (241 aa).

Transmembrane regions (helical) follow at residues 23–43 (VSFT…AAFF), 83–103 (YFPY…LGML), 113–133 (IAVT…IGFA), 188–208 (VLAG…FAVV), and 209–229 (LGVT…FTIL).

This sequence belongs to the ATPase A chain family. In terms of assembly, F-type ATPases have 2 components, CF(1) - the catalytic core - and CF(0) - the membrane proton channel. CF(1) has five subunits: alpha(3), beta(3), gamma(1), delta(1), epsilon(1). CF(0) has four main subunits: a, b, b' and c.

The protein localises to the cell inner membrane. In terms of biological role, key component of the proton channel; it plays a direct role in the translocation of protons across the membrane. The polypeptide is ATP synthase subunit a (Rhodospirillum rubrum (strain ATCC 11170 / ATH 1.1.1 / DSM 467 / LMG 4362 / NCIMB 8255 / S1)).